We begin with the raw amino-acid sequence, 184 residues long: ATP synthase subunit b, chloroplastic (184 aa).

The helical transmembrane segment at 27–49 (LATNPINLSIVIGVLIFFGKGVL) threads the bilayer.

Belongs to the ATPase B chain family. F-type ATPases have 2 components, F(1) - the catalytic core - and F(0) - the membrane proton channel. F(1) has five subunits: alpha(3), beta(3), gamma(1), delta(1), epsilon(1). F(0) has four main subunits: a(1), b(1), b'(1) and c(10-14). The alpha and beta chains form an alternating ring which encloses part of the gamma chain. F(1) is attached to F(0) by a central stalk formed by the gamma and epsilon chains, while a peripheral stalk is formed by the delta, b and b' chains.

The protein localises to the plastid. The protein resides in the chloroplast thylakoid membrane. Functionally, f(1)F(0) ATP synthase produces ATP from ADP in the presence of a proton or sodium gradient. F-type ATPases consist of two structural domains, F(1) containing the extramembraneous catalytic core and F(0) containing the membrane proton channel, linked together by a central stalk and a peripheral stalk. During catalysis, ATP synthesis in the catalytic domain of F(1) is coupled via a rotary mechanism of the central stalk subunits to proton translocation. Its function is as follows. Component of the F(0) channel, it forms part of the peripheral stalk, linking F(1) to F(0). This is ATP synthase subunit b, chloroplastic from Lotus japonicus (Lotus corniculatus var. japonicus).